The chain runs to 174 residues: Centrosomal protein 20 (174 aa).

Positions Met1–Ile104 are necessary and sufficient for homooligomerization and localization to centrosomes and pericentriolar satellites. One can recognise a LisH domain in the interval Glu49–Val81. The interval Thr136–Arg174 is disordered. Phosphoserine is present on Ser144. The span at Arg145–Gly157 shows a compositional bias: basic and acidic residues.

The protein belongs to the CEP43 family. Homooligomer; probably required for localization to centrosomes. Forms a complex with KIAA0753/OFIP and OFD1; within this complex may stabilize the interaction between OFD1 and KIAA0753/OFIP. Interacts with PCM1; this interaction may be mediated by KIAA0753/OFIP.

The protein localises to the cytoplasm. The protein resides in the cytoskeleton. It localises to the microtubule organizing center. Its subcellular location is the centrosome. It is found in the centriole. The protein localises to the cell projection. The protein resides in the cilium. It localises to the cilium basal body. Its subcellular location is the cytoplasmic granule. It is found in the centriolar satellite. Functionally, involved in the biogenesis of cilia. Required for the recruitment of PLK1 to centrosomes and S phase progression. This is Centrosomal protein 20 from Mus musculus (Mouse).